The following is a 515-amino-acid chain: 2,3-bisphosphoglycerate-independent phosphoglycerate mutase (515 aa).

Mn(2+) is bound by residues Asp-14 and Ser-64. Ser-64 functions as the Phosphoserine intermediate in the catalytic mechanism. Residues His-125, 155–156 (RD), Arg-187, Arg-193, 263–266 (RADR), and Lys-337 each bind substrate. Mn(2+) is bound by residues Asp-404, His-408, Asp-445, His-446, and His-464.

It belongs to the BPG-independent phosphoglycerate mutase family. Monomer. Mn(2+) is required as a cofactor.

It carries out the reaction (2R)-2-phosphoglycerate = (2R)-3-phosphoglycerate. The protein operates within carbohydrate degradation; glycolysis; pyruvate from D-glyceraldehyde 3-phosphate: step 3/5. Its function is as follows. Catalyzes the interconversion of 2-phosphoglycerate and 3-phosphoglycerate. The chain is 2,3-bisphosphoglycerate-independent phosphoglycerate mutase from Pseudomonas aeruginosa (strain UCBPP-PA14).